A 286-amino-acid chain; its full sequence is Protein NipSnap homolog 2 (286 aa).

The transit peptide at 1–23 (MAARVLRARGAAWAGGLLQRAAP) directs the protein to the mitochondrion.

It belongs to the NipSnap family. Interacts with CALCOCO2/NDP52, NBR1, SQSTM1/p62, TAX1BP1 and WDFY3/ALFY. Interacts with ATG8 family proteins (MAP1LC3A, MAP1LC3B, MAP1LC3C, GABARAP, GABARAPL1 and GABARAPL2). Interacts with VDAC1. In terms of tissue distribution, widely expressed. Most abundant in heart and skeletal muscle.

Its subcellular location is the mitochondrion matrix. Its function is as follows. Protein involved in mitophagy by facilitating recruitment of the autophagy machinery required for clearance of damaged mitochondria. Accumulates on the mitochondria surface in response to mitochondrial depolarization and acts as a 'eat me' signal by recruiting proteins involved in selective autophagy, such as autophagy receptors (CALCOCO2/NDP52, NBR1, SQSTM1/p62, TAX1BP1 and WDFY3/ALFY) and ATG8 family proteins (MAP1LC3A, MAP1LC3B, MAP1LC3C, GABARAP, GABARAPL1 and GABARAPL2). The chain is Protein NipSnap homolog 2 from Homo sapiens (Human).